Reading from the N-terminus, the 264-residue chain is uncharacterized protein (264 aa).

The signal sequence occupies residues 1–22 (MKRKLTICLLIALIFYNGNAKA). The helical transmembrane segment at 227 to 247 (LLWVIITTGSIIITALTYVGY) threads the bilayer.

Its subcellular location is the membrane. This is an uncharacterized protein from Bacillus subtilis (strain 168).